A 462-amino-acid chain; its full sequence is Exodeoxyribonuclease 7 large subunit (462 aa).

Belongs to the XseA family. In terms of assembly, heterooligomer composed of large and small subunits.

The protein resides in the cytoplasm. It catalyses the reaction Exonucleolytic cleavage in either 5'- to 3'- or 3'- to 5'-direction to yield nucleoside 5'-phosphates.. Functionally, bidirectionally degrades single-stranded DNA into large acid-insoluble oligonucleotides, which are then degraded further into small acid-soluble oligonucleotides. This Pectobacterium carotovorum subsp. carotovorum (strain PC1) protein is Exodeoxyribonuclease 7 large subunit.